The sequence spans 136 residues: Large ribosomal subunit protein bL19 (136 aa).

It belongs to the bacterial ribosomal protein bL19 family.

In terms of biological role, this protein is located at the 30S-50S ribosomal subunit interface and may play a role in the structure and function of the aminoacyl-tRNA binding site. This is Large ribosomal subunit protein bL19 from Xylella fastidiosa (strain 9a5c).